Reading from the N-terminus, the 127-residue chain is Large ribosomal subunit protein bL17 (127 aa).

It belongs to the bacterial ribosomal protein bL17 family. As to quaternary structure, part of the 50S ribosomal subunit. Contacts protein L32.

The polypeptide is Large ribosomal subunit protein bL17 (Stenotrophomonas maltophilia (strain R551-3)).